Reading from the N-terminus, the 427-residue chain is Serine--tRNA ligase (427 aa).

236–238 (TAE) lines the L-serine pocket. Residue 267-269 (RRE) participates in ATP binding. Glu290 is an L-serine binding site. 354–357 (EISS) is a binding site for ATP. Ser390 lines the L-serine pocket.

This sequence belongs to the class-II aminoacyl-tRNA synthetase family. Type-1 seryl-tRNA synthetase subfamily. As to quaternary structure, homodimer. The tRNA molecule binds across the dimer.

It localises to the cytoplasm. The catalysed reaction is tRNA(Ser) + L-serine + ATP = L-seryl-tRNA(Ser) + AMP + diphosphate + H(+). The enzyme catalyses tRNA(Sec) + L-serine + ATP = L-seryl-tRNA(Sec) + AMP + diphosphate + H(+). It participates in aminoacyl-tRNA biosynthesis; selenocysteinyl-tRNA(Sec) biosynthesis; L-seryl-tRNA(Sec) from L-serine and tRNA(Sec): step 1/1. Its function is as follows. Catalyzes the attachment of serine to tRNA(Ser). Is also able to aminoacylate tRNA(Sec) with serine, to form the misacylated tRNA L-seryl-tRNA(Sec), which will be further converted into selenocysteinyl-tRNA(Sec). The polypeptide is Serine--tRNA ligase (Rippkaea orientalis (strain PCC 8801 / RF-1) (Cyanothece sp. (strain PCC 8801))).